The sequence spans 382 residues: Anhydro-N-acetylmuramic acid kinase (382 aa).

22 to 29 (GTSMDGVD) is a binding site for ATP.

It belongs to the anhydro-N-acetylmuramic acid kinase family.

It catalyses the reaction 1,6-anhydro-N-acetyl-beta-muramate + ATP + H2O = N-acetyl-D-muramate 6-phosphate + ADP + H(+). The protein operates within amino-sugar metabolism; 1,6-anhydro-N-acetylmuramate degradation. It participates in cell wall biogenesis; peptidoglycan recycling. Its function is as follows. Catalyzes the specific phosphorylation of 1,6-anhydro-N-acetylmuramic acid (anhMurNAc) with the simultaneous cleavage of the 1,6-anhydro ring, generating MurNAc-6-P. Is required for the utilization of anhMurNAc either imported from the medium or derived from its own cell wall murein, and thus plays a role in cell wall recycling. The chain is Anhydro-N-acetylmuramic acid kinase from Burkholderia orbicola (strain MC0-3).